The primary structure comprises 555 residues: Dihydroxy-acid dehydratase (555 aa).

Mg(2+) is bound at residue aspartate 78. Cysteine 119 contacts [2Fe-2S] cluster. Residues aspartate 120 and lysine 121 each contribute to the Mg(2+) site. Lysine 121 bears the N6-carboxylysine mark. A [2Fe-2S] cluster-binding site is contributed by cysteine 191. A Mg(2+)-binding site is contributed by glutamate 444. The active-site Proton acceptor is serine 470.

Belongs to the IlvD/Edd family. As to quaternary structure, homodimer. It depends on [2Fe-2S] cluster as a cofactor. Mg(2+) serves as cofactor.

It catalyses the reaction (2R)-2,3-dihydroxy-3-methylbutanoate = 3-methyl-2-oxobutanoate + H2O. The enzyme catalyses (2R,3R)-2,3-dihydroxy-3-methylpentanoate = (S)-3-methyl-2-oxopentanoate + H2O. Its pathway is amino-acid biosynthesis; L-isoleucine biosynthesis; L-isoleucine from 2-oxobutanoate: step 3/4. The protein operates within amino-acid biosynthesis; L-valine biosynthesis; L-valine from pyruvate: step 3/4. Functions in the biosynthesis of branched-chain amino acids. Catalyzes the dehydration of (2R,3R)-2,3-dihydroxy-3-methylpentanoate (2,3-dihydroxy-3-methylvalerate) into 2-oxo-3-methylpentanoate (2-oxo-3-methylvalerate) and of (2R)-2,3-dihydroxy-3-methylbutanoate (2,3-dihydroxyisovalerate) into 2-oxo-3-methylbutanoate (2-oxoisovalerate), the penultimate precursor to L-isoleucine and L-valine, respectively. The chain is Dihydroxy-acid dehydratase from Maridesulfovibrio salexigens (strain ATCC 14822 / DSM 2638 / NCIMB 8403 / VKM B-1763) (Desulfovibrio salexigens).